The primary structure comprises 383 residues: Na(+)/H(+) antiporter NhaA (383 aa).

The next 11 helical transmembrane spans lie at 10 to 30 (LIGG…NNSP), 56 to 76 (LMHW…GLEI), 91 to 111 (IITP…IYLS), 121 to 141 (GWAI…ALLG), 150 to 170 (LLVI…IAIF), 174 to 194 (SLSL…IICN), 206 to 226 (VVLG…ATLA), 254 to 274 (PWII…ISFS), 289 to 308 (IIWG…LAVF), 327 to 347 (GISL…VLAF), and 355 to 375 (AIKI…YIVL).

Belongs to the NhaA Na(+)/H(+) (TC 2.A.33) antiporter family.

Its subcellular location is the cell inner membrane. It carries out the reaction Na(+)(in) + 2 H(+)(out) = Na(+)(out) + 2 H(+)(in). Na(+)/H(+) antiporter that extrudes sodium in exchange for external protons. This chain is Na(+)/H(+) antiporter NhaA, found in Francisella tularensis subsp. mediasiatica (strain FSC147).